The primary structure comprises 426 residues: 3-phosphoshikimate 1-carboxyvinyltransferase (426 aa).

3-phosphoshikimate contacts are provided by lysine 20, serine 21, and arginine 25. Lysine 20 contributes to the phosphoenolpyruvate binding site. Positions 92 and 120 each coordinate phosphoenolpyruvate. 3-phosphoshikimate is bound by residues serine 166, glutamine 168, aspartate 312, and lysine 339. Position 168 (glutamine 168) interacts with phosphoenolpyruvate. Residue aspartate 312 is the Proton acceptor of the active site. Arginine 385 contributes to the phosphoenolpyruvate binding site.

This sequence belongs to the EPSP synthase family. As to quaternary structure, monomer.

The protein resides in the cytoplasm. It carries out the reaction 3-phosphoshikimate + phosphoenolpyruvate = 5-O-(1-carboxyvinyl)-3-phosphoshikimate + phosphate. Its pathway is metabolic intermediate biosynthesis; chorismate biosynthesis; chorismate from D-erythrose 4-phosphate and phosphoenolpyruvate: step 6/7. Its function is as follows. Catalyzes the transfer of the enolpyruvyl moiety of phosphoenolpyruvate (PEP) to the 5-hydroxyl of shikimate-3-phosphate (S3P) to produce enolpyruvyl shikimate-3-phosphate and inorganic phosphate. This is 3-phosphoshikimate 1-carboxyvinyltransferase from Streptococcus suis (strain 98HAH33).